The sequence spans 780 residues: Tyrosine-protein phosphatase non-receptor type 12 (780 aa).

Methionine 1 carries the post-translational modification N-acetylmethionine. Serine 19 bears the Phosphoserine mark. Residues 28–293 (FARDFMRLRR…ELVHRAIAQL (266 aa)) form the Tyrosine-protein phosphatase domain. Substrate-binding positions include arginine 36, 63–67 (RYKDI), aspartate 199, 231–237 (CSAGCGR), and glutamine 278. Catalysis depends on cysteine 231, which acts as the Phosphocysteine intermediate. Residues serine 332, serine 435, serine 449, and serine 468 each carry the phosphoserine modification. An interaction with TGFB1I1 region spans residues 345-438 (VEGDAKEEIL…KLERNLSFEI (94 aa)). A compositionally biased stretch (polar residues) spans 502–519 (QSNKVSVTPPEESQNSDT). Disordered stretches follow at residues 502 to 639 (QSNK…STES), 657 to 725 (GTTH…EKCD), and 744 to 780 (SDKREQISENPTEATDIGFGNRCGKPKGPRDPPSEWT). Residues threonine 509 and threonine 519 each carry the phosphothreonine modification. Residues 521–533 (PRPDRLPLDEKGH) show a composition bias toward basic and acidic residues. 2 stretches are compositionally biased toward polar residues: residues 552–577 (EGNSSDINYQTRKTVSLTPSPTTQVE) and 587–601 (TSPLFRTPLSFTNPL). Phosphoserine is present on serine 567. A Phosphothreonine modification is found at threonine 569. Phosphoserine occurs at positions 571 and 596. Residue threonine 598 is modified to Phosphothreonine. Basic and acidic residues predominate over residues 602-613 (HSDDSDSDERNS). Phosphoserine is present on residues serine 603, serine 606, serine 608, and serine 613. The segment covering 622–639 (TNISTASATVSAATSTES) has biased composition (low complexity). Phosphoserine occurs at positions 673 and 689. A compositionally biased stretch (polar residues) spans 690–703 (EHNTPVRSEWSELQ). The residue at position 693 (threonine 693) is a Phosphothreonine. Basic and acidic residues-rich tracts occupy residues 704–725 (SQERSEQKKSEGLITSENEKCD) and 771–780 (GPRDPPSEWT).

The protein belongs to the protein-tyrosine phosphatase family. Non-receptor class 4 subfamily. In terms of assembly, interacts with TGFB1I1. Interacts with PSTPIP1. Interacts with PTK2B/PYK2. Interacts with LPXN. Interacts with SORBS2; this interaction greatly enhances WASF1 dephosphorylation and might mediate partial translocation to focal adhesion sites. Post-translationally, phosphorylated by STK24/MST3 and this results in inhibition of its activity.

Its subcellular location is the cytoplasm. It localises to the cell junction. The protein resides in the focal adhesion. The protein localises to the cell projection. It is found in the podosome. The catalysed reaction is O-phospho-L-tyrosyl-[protein] + H2O = L-tyrosyl-[protein] + phosphate. Functionally, dephosphorylates a range of proteins, and thereby regulates cellular signaling cascades. Dephosphorylates cellular tyrosine kinases, such as ERBB2 and PTK2B/PYK2, and thereby regulates signaling via ERBB2 and PTK2B/PYK2. Selectively dephosphorylates ERBB2 phosphorylated at 'Tyr-1112', 'Tyr-1196', and/or 'Tyr-1248'. The protein is Tyrosine-protein phosphatase non-receptor type 12 (PTPN12) of Homo sapiens (Human).